Here is a 343-residue protein sequence, read N- to C-terminus: Anthranilate phosphoribosyltransferase (343 aa).

Residues Gly84, 87–88, Thr92, 94–97, 112–120, and Ser124 contribute to the 5-phospho-alpha-D-ribose 1-diphosphate site; these read GD, NIST, and KHGNRGVSS. Gly84 provides a ligand contact to anthranilate. Ser96 is a Mg(2+) binding site. Asn115 serves as a coordination point for anthranilate. Residue Arg170 coordinates anthranilate. Mg(2+) is bound by residues Asp229 and Glu230.

The protein belongs to the anthranilate phosphoribosyltransferase family. Homodimer. Mg(2+) is required as a cofactor.

The enzyme catalyses N-(5-phospho-beta-D-ribosyl)anthranilate + diphosphate = 5-phospho-alpha-D-ribose 1-diphosphate + anthranilate. The protein operates within amino-acid biosynthesis; L-tryptophan biosynthesis; L-tryptophan from chorismate: step 2/5. Functionally, catalyzes the transfer of the phosphoribosyl group of 5-phosphorylribose-1-pyrophosphate (PRPP) to anthranilate to yield N-(5'-phosphoribosyl)-anthranilate (PRA). This is Anthranilate phosphoribosyltransferase from Burkholderia ambifaria (strain ATCC BAA-244 / DSM 16087 / CCUG 44356 / LMG 19182 / AMMD) (Burkholderia cepacia (strain AMMD)).